A 173-amino-acid polypeptide reads, in one-letter code: MFRPPSIKDAKKIWELIGRCKPLDINSPYCYALIGRDFFDSSIVYEEEGRIKGVVIGYLRPRAPERLFVWQVAIEAKSRGKGIAKRAIEAILKNLERKGHCIQAIEATYTPSNLASKALFHALGREWKVVWIEENFLEGALLSAQEAHEEEWLITLPFSSEALGVQGANHANL.

Residues methionine 1–histidine 148 form the N-acetyltransferase domain.

Belongs to the acetyltransferase family. EctA subfamily.

It carries out the reaction L-2,4-diaminobutanoate + acetyl-CoA = (2S)-4-acetamido-2-aminobutanoate + CoA + H(+). Its pathway is amine and polyamine biosynthesis; ectoine biosynthesis; L-ectoine from L-aspartate 4-semialdehyde: step 2/3. In terms of biological role, catalyzes the acetylation of L-2,4-diaminobutyrate (DABA) to gamma-N-acetyl-alpha,gamma-diaminobutyric acid (ADABA) with acetyl coenzyme A. The sequence is that of L-2,4-diaminobutyric acid acetyltransferase (ectA) from Wolinella succinogenes (strain ATCC 29543 / DSM 1740 / CCUG 13145 / JCM 31913 / LMG 7466 / NCTC 11488 / FDC 602W) (Vibrio succinogenes).